A 132-amino-acid chain; its full sequence is Small ribosomal subunit protein uS8 (132 aa).

Belongs to the universal ribosomal protein uS8 family. In terms of assembly, part of the 30S ribosomal subunit. Contacts proteins S5 and S12.

Its function is as follows. One of the primary rRNA binding proteins, it binds directly to 16S rRNA central domain where it helps coordinate assembly of the platform of the 30S subunit. The protein is Small ribosomal subunit protein uS8 of Desulforamulus reducens (strain ATCC BAA-1160 / DSM 100696 / MI-1) (Desulfotomaculum reducens).